The sequence spans 597 residues: Arginine--tRNA ligase (597 aa).

The 'HIGH' region motif lies at 124 to 134 (PNVAKPLHVGH).

Belongs to the class-I aminoacyl-tRNA synthetase family. Monomer.

Its subcellular location is the cytoplasm. It carries out the reaction tRNA(Arg) + L-arginine + ATP = L-arginyl-tRNA(Arg) + AMP + diphosphate. The sequence is that of Arginine--tRNA ligase from Agathobacter rectalis (strain ATCC 33656 / DSM 3377 / JCM 17463 / KCTC 5835 / VPI 0990) (Eubacterium rectale).